A 101-amino-acid polypeptide reads, in one-letter code: Large ribosomal subunit protein uL23 (101 aa).

It belongs to the universal ribosomal protein uL23 family. In terms of assembly, part of the 50S ribosomal subunit. Contacts protein L29, and trigger factor when it is bound to the ribosome.

Its function is as follows. One of the early assembly proteins it binds 23S rRNA. One of the proteins that surrounds the polypeptide exit tunnel on the outside of the ribosome. Forms the main docking site for trigger factor binding to the ribosome. The polypeptide is Large ribosomal subunit protein uL23 (Azoarcus sp. (strain BH72)).